The sequence spans 113 residues: Cell cycle control protein 50C (113 aa).

The Cytoplasmic portion of the chain corresponds to 1–34 (MEERAQHCLSRLLDNSALKQQELPIHRLYFTARR). A helical membrane pass occupies residues 35-55 (VLFVFFATGIFCLCMGIILIL). Over 56–113 (SARSTQEIEINYTRICANCAKLRENASNFDKECTCSIPFYLSGKMMVGEIQETRLTLH) the chain is Extracellular. N-linked (GlcNAc...) asparagine glycosylation occurs at asparagine 66.

It belongs to the CDC50/LEM3 family. As to expression, specifically expressed in testis.

Its subcellular location is the membrane. This chain is Cell cycle control protein 50C, found in Homo sapiens (Human).